The chain runs to 513 residues: Sucrose transport protein SUC1 (513 aa).

A compositionally biased stretch (basic and acidic residues) spans Met-1–Lys-11. A disordered region spans residues Met-1 to Gln-26. The Cytoplasmic portion of the chain corresponds to Met-1 to Lys-32. Phosphoserine is present on Ser-20. A helical membrane pass occupies residues Ile-33–Leu-53. Over Leu-54–Trp-67 the chain is Extracellular. A helical transmembrane segment spans residues Ser-68–Phe-88. At His-89–Arg-101 the chain is on the cytoplasmic side. The chain crosses the membrane as a helical span at residues Pro-102–Ala-122. Residues Asp-123–Arg-139 are Extracellular-facing. The chain crosses the membrane as a helical span at residues Ala-140–Gly-160. Topologically, residues Pro-161 to Arg-178 are cytoplasmic. The helical transmembrane segment at Val-179 to Gly-199 threads the bilayer. Residues Ser-200–Lys-224 are Extracellular-facing. A helical transmembrane segment spans residues Thr-225–Val-245. Over Asn-246–Pro-282 the chain is Cytoplasmic. The helical transmembrane segment at Met-283–Phe-303 threads the bilayer. The Extracellular portion of the chain corresponds to Asp-304 to Gly-334. The helical transmembrane segment at Ala-335–Ile-355 threads the bilayer. Residues Gly-356–Leu-365 lie on the Cytoplasmic side of the membrane. Residues Trp-366 to Phe-386 form a helical membrane-spanning segment. The Extracellular segment spans residues Ala-387–Ala-408. The helical transmembrane segment at Leu-409 to Leu-429 threads the bilayer. The Cytoplasmic portion of the chain corresponds to Ala-430 to Gln-441. A helical membrane pass occupies residues Gly-442–Gly-462. At Gly-463 to Asn-474 the chain is on the extracellular side. The helical transmembrane segment at Leu-475–Val-495 threads the bilayer. Topologically, residues Leu-496–His-513 are cytoplasmic.

This sequence belongs to the glycoside-pentoside-hexuronide (GPH) cation symporter transporter (TC 2.A.2.4) family. As to expression, expressed in flowers (at protein level). Highly expressed in pollen. Expressed in pollen tubes and root vascular cylinder, pericycle and endodermis.

It localises to the membrane. The catalysed reaction is sucrose(out) + H(+)(out) = sucrose(in) + H(+)(in). It participates in glycan biosynthesis; sucrose metabolism. Inhibited by DEPC, protonophores (e.g. dinitrophenol and carbonyl cyanide m-chlorophenyl-hydrazone (CCCP)), and SH group inhibitors (e.g. N-ethylmaleimide (NEM) and p-chloromercuriphenyl sulphonic acid (PCMPS)). Its function is as follows. Responsible for the transport of sucrose into the cell, with the concomitant uptake of protons (symport system). This transport is both voltage- and energy-dependent. Can also transport other glucosides such as maltose, alpha-phenylglucoside and beta-phenylglucoside. May also transport biotin. Required for normal pollen germination and anthocyanin accumulation induced by sucrose. The sequence is that of Sucrose transport protein SUC1 from Arabidopsis thaliana (Mouse-ear cress).